A 179-amino-acid chain; its full sequence is NADH dehydrogenase [ubiquinone] 1 beta subcomplex subunit 9 (179 aa).

Ala-2 carries the post-translational modification N-acetylalanine. Ser-85 carries the post-translational modification Phosphoserine. Residues 136 to 162 (EVKQLQEETPPGGPLTEALPPARKEGD) form a disordered region.

Belongs to the complex I LYR family. As to quaternary structure, mammalian complex I is composed of 45 different subunits.

The protein resides in the mitochondrion inner membrane. Accessory subunit of the mitochondrial membrane respiratory chain NADH dehydrogenase (Complex I), that is believed to be not involved in catalysis. Complex I functions in the transfer of electrons from NADH to the respiratory chain. The immediate electron acceptor for the enzyme is believed to be ubiquinone. The chain is NADH dehydrogenase [ubiquinone] 1 beta subcomplex subunit 9 (NDUFB9) from Homo sapiens (Human).